Here is a 250-residue protein sequence, read N- to C-terminus: Small ribosomal subunit protein uS2 (250 aa).

The protein belongs to the universal ribosomal protein uS2 family.

The chain is Small ribosomal subunit protein uS2 from Paraburkholderia xenovorans (strain LB400).